The chain runs to 383 residues: tRNA-specific 2-thiouridylase MnmA (383 aa).

ATP contacts are provided by residues 10–17 (AMSGGVDS) and Met36. Residue Cys107 is the Nucleophile of the active site. A disulfide bridge connects residues Cys107 and Cys206. An ATP-binding site is contributed by Gly131. Residues 155-157 (KDQ) form an interaction with tRNA region. The Cysteine persulfide intermediate role is filled by Cys206. The segment at 315–316 (RY) is interaction with tRNA.

It belongs to the MnmA/TRMU family.

It localises to the cytoplasm. The catalysed reaction is S-sulfanyl-L-cysteinyl-[protein] + uridine(34) in tRNA + AH2 + ATP = 2-thiouridine(34) in tRNA + L-cysteinyl-[protein] + A + AMP + diphosphate + H(+). Functionally, catalyzes the 2-thiolation of uridine at the wobble position (U34) of tRNA, leading to the formation of s(2)U34. The chain is tRNA-specific 2-thiouridylase MnmA from Salinibacter ruber (strain DSM 13855 / M31).